The sequence spans 272 residues: Microcin B17-processing protein McbC (272 aa).

It to R.leguminosarum TfxB which is involved in the processing of trifolitoxin.

It localises to the cytoplasm. Necessary to process the inactive microcin B17 (McbA) precursor into the active peptide. This chain is Microcin B17-processing protein McbC (mcbC), found in Escherichia coli.